Reading from the N-terminus, the 55-residue chain is MAKAVTIKIKLVSTADTGFYYVTKKNSRTMTDKMVKKKYDPVARKHVEFKEAKIK.

The protein is methylated on either Ala-2 or Lys-3.

The chain is Large ribosomal subunit protein bL33 from Rhodopseudomonas palustris (strain ATCC BAA-98 / CGA009).